Reading from the N-terminus, the 493-residue chain is Bifunctional protein GlmU (493 aa).

A pyrophosphorylase region spans residues 1 to 246 (MTGELDVDGE…SWLVAGINDR (246 aa)). Residues 21–24 (LAAG), lysine 35, glutamine 88, 93–94 (GT), 117–119 (SGD), glycine 156, glutamate 171, asparagine 186, and asparagine 244 contribute to the UDP-N-acetyl-alpha-D-glucosamine site. Aspartate 119 is a Mg(2+) binding site. Asparagine 244 lines the Mg(2+) pocket. Positions 247–267 (VQLTAAATELNARIIRRWQLA) are linker. The interval 268–493 (GVTIHDPRTT…DGPADDASDA (226 aa)) is N-acetyltransferase. UDP-N-acetyl-alpha-D-glucosamine-binding residues include arginine 349 and lysine 367. The active-site Proton acceptor is histidine 379. 2 residues coordinate UDP-N-acetyl-alpha-D-glucosamine: tyrosine 382 and asparagine 393. Residues alanine 396, 402 to 403 (NY), serine 421, and alanine 439 each bind acetyl-CoA. The segment at 470-493 (RPGTPEARAAVEAADGPADDASDA) is disordered.

This sequence in the N-terminal section; belongs to the N-acetylglucosamine-1-phosphate uridyltransferase family. It in the C-terminal section; belongs to the transferase hexapeptide repeat family. Homotrimer. Mg(2+) is required as a cofactor.

The protein resides in the cytoplasm. The enzyme catalyses alpha-D-glucosamine 1-phosphate + acetyl-CoA = N-acetyl-alpha-D-glucosamine 1-phosphate + CoA + H(+). It carries out the reaction N-acetyl-alpha-D-glucosamine 1-phosphate + UTP + H(+) = UDP-N-acetyl-alpha-D-glucosamine + diphosphate. It participates in nucleotide-sugar biosynthesis; UDP-N-acetyl-alpha-D-glucosamine biosynthesis; N-acetyl-alpha-D-glucosamine 1-phosphate from alpha-D-glucosamine 6-phosphate (route II): step 2/2. It functions in the pathway nucleotide-sugar biosynthesis; UDP-N-acetyl-alpha-D-glucosamine biosynthesis; UDP-N-acetyl-alpha-D-glucosamine from N-acetyl-alpha-D-glucosamine 1-phosphate: step 1/1. The protein operates within bacterial outer membrane biogenesis; LPS lipid A biosynthesis. Its function is as follows. Catalyzes the last two sequential reactions in the de novo biosynthetic pathway for UDP-N-acetylglucosamine (UDP-GlcNAc). The C-terminal domain catalyzes the transfer of acetyl group from acetyl coenzyme A to glucosamine-1-phosphate (GlcN-1-P) to produce N-acetylglucosamine-1-phosphate (GlcNAc-1-P), which is converted into UDP-GlcNAc by the transfer of uridine 5-monophosphate (from uridine 5-triphosphate), a reaction catalyzed by the N-terminal domain. The sequence is that of Bifunctional protein GlmU from Clavibacter sepedonicus (Clavibacter michiganensis subsp. sepedonicus).